Here is a 403-residue protein sequence, read N- to C-terminus: Prostaglandin D2 receptor 2 (403 aa).

At 1-34 the chain is on the extracellular side; it reads MANITLKPLCPLLEEMVQLPNHSNSSLRYIDHVS. N-linked (GlcNAc...) asparagine glycosylation is found at N3, N21, and N24. The helical transmembrane segment at 35-55 threads the bilayer; the sequence is VLLHGLASLLGLVENGLILFV. Residues 56 to 71 lie on the Cytoplasmic side of the membrane; that stretch reads VGCRMRQTVVTTWVLH. The helical transmembrane segment at 72-92 threads the bilayer; it reads LALSDLLAAASLPFFTYFLAV. The Extracellular segment spans residues 93 to 104; sequence GHSWELGTTFCK. An intrachain disulfide couples C103 to C198. The helical transmembrane segment at 105 to 125 threads the bilayer; the sequence is LHSSVFFLNMFASGFLLSAIS. Topologically, residues 126-147 are cytoplasmic; the sequence is LDRCLQVVRPVWAQNHRTVAAA. Residues 148–168 traverse the membrane as a helical segment; it reads HRVCLMLWALAVLNTVPYFVF. The Extracellular portion of the chain corresponds to 169 to 209; that stretch reads RDTIPRRDGRIMCYYNMLLLNPGSDRDTTCDYRQKALAVSK. The helical transmembrane segment at 210 to 230 threads the bilayer; sequence FLLAFMVPLAIIASSHVAVSL. Residues 231-245 lie on the Cytoplasmic side of the membrane; sequence QLHHRGRQRTGRFVR. A helical membrane pass occupies residues 246–266; sequence LVAAIVVAFILCWGPYHIFSL. The Extracellular portion of the chain corresponds to 267–284; sequence LEARAHSVTTLRQLASRG. The chain crosses the membrane as a helical span at residues 285–305; that stretch reads LPFVTSLAFFNSVVNPLLYVL. Topologically, residues 306 to 403 are cytoplasmic; the sequence is TCPDMLHKLR…KQGSLSCTLD (98 aa). The Involved in the recycling of CRTH2 motif lies at 329–332; the sequence is DSDL. A Phosphoserine modification is found at S330. Disordered regions lie at residues 332–353 and 384–403; these read LSTGPGKRCRRRHRRRASSTTT and PRRVREQSQEKQGSLSCTLD. The span at 338 to 348 shows a compositional bias: basic residues; that stretch reads KRCRRRHRRRA. S349 carries the post-translational modification Phosphoserine. Residues 393–403 show a composition bias toward polar residues; sequence EKQGSLSCTLD.

Belongs to the G-protein coupled receptor 1 family. Post-translationally, phosphorylated.

It localises to the cell membrane. In terms of biological role, receptor for prostaglandin D2 (PGD2). Coupled to the G(i)-protein. Receptor activation may result in pertussis toxin-sensitive decreases in cAMP levels and Ca(2+) mobilization. PI3K signaling is also implicated in mediating PTGDR2 effects. PGD2 induced receptor internalization. CRTH2 internalization can be regulated by diverse kinases such as, PKC, PKA, GRK2, GPRK5/GRK5 and GRK6. Receptor activation is responsible, at least in part, in immune regulation and allergic/inflammation responses. The protein is Prostaglandin D2 receptor 2 (Ptgdr2) of Rattus norvegicus (Rat).